The primary structure comprises 450 residues: 3-phosphoshikimate 1-carboxyvinyltransferase (450 aa).

3-phosphoshikimate contacts are provided by Lys28, Ser29, and Arg33. Lys28 is a phosphoenolpyruvate binding site. The phosphoenolpyruvate site is built by Gly100 and Arg128. Ser173, Gln175, Asp326, and Lys353 together coordinate 3-phosphoshikimate. Residue Gln175 participates in phosphoenolpyruvate binding. The active-site Proton acceptor is Asp326. 2 residues coordinate phosphoenolpyruvate: Arg357 and Arg402.

It belongs to the EPSP synthase family. In terms of assembly, monomer.

It localises to the cytoplasm. The catalysed reaction is 3-phosphoshikimate + phosphoenolpyruvate = 5-O-(1-carboxyvinyl)-3-phosphoshikimate + phosphate. The protein operates within metabolic intermediate biosynthesis; chorismate biosynthesis; chorismate from D-erythrose 4-phosphate and phosphoenolpyruvate: step 6/7. In terms of biological role, catalyzes the transfer of the enolpyruvyl moiety of phosphoenolpyruvate (PEP) to the 5-hydroxyl of shikimate-3-phosphate (S3P) to produce enolpyruvyl shikimate-3-phosphate and inorganic phosphate. The sequence is that of 3-phosphoshikimate 1-carboxyvinyltransferase from Brucella melitensis biotype 2 (strain ATCC 23457).